Here is a 162-residue protein sequence, read N- to C-terminus: Crossover junction endodeoxyribonuclease RuvC (162 aa).

Active-site residues include Asp-7, Glu-67, and Asp-140. Mg(2+) contacts are provided by Asp-7, Glu-67, and Asp-140.

The protein belongs to the RuvC family. In terms of assembly, homodimer which binds Holliday junction (HJ) DNA. The HJ becomes 2-fold symmetrical on binding to RuvC with unstacked arms; it has a different conformation from HJ DNA in complex with RuvA. In the full resolvosome a probable DNA-RuvA(4)-RuvB(12)-RuvC(2) complex forms which resolves the HJ. It depends on Mg(2+) as a cofactor.

It is found in the cytoplasm. The catalysed reaction is Endonucleolytic cleavage at a junction such as a reciprocal single-stranded crossover between two homologous DNA duplexes (Holliday junction).. Its function is as follows. The RuvA-RuvB-RuvC complex processes Holliday junction (HJ) DNA during genetic recombination and DNA repair. Endonuclease that resolves HJ intermediates. Cleaves cruciform DNA by making single-stranded nicks across the HJ at symmetrical positions within the homologous arms, yielding a 5'-phosphate and a 3'-hydroxyl group; requires a central core of homology in the junction. The consensus cleavage sequence is 5'-(A/T)TT(C/G)-3'. Cleavage occurs on the 3'-side of the TT dinucleotide at the point of strand exchange. HJ branch migration catalyzed by RuvA-RuvB allows RuvC to scan DNA until it finds its consensus sequence, where it cleaves and resolves the cruciform DNA. The sequence is that of Crossover junction endodeoxyribonuclease RuvC from Pseudothermotoga lettingae (strain ATCC BAA-301 / DSM 14385 / NBRC 107922 / TMO) (Thermotoga lettingae).